A 261-amino-acid chain; its full sequence is Enolase-phosphatase E1 (261 aa).

The Mg(2+) site is built by Asp16 and Glu18. Substrate is bound by residues 153-154 (SS) and Lys187. Asp212 is a Mg(2+) binding site.

Belongs to the HAD-like hydrolase superfamily. MasA/MtnC family. In terms of assembly, monomer. Mg(2+) is required as a cofactor.

It localises to the cytoplasm. The protein localises to the nucleus. It catalyses the reaction 5-methylsulfanyl-2,3-dioxopentyl phosphate + H2O = 1,2-dihydroxy-5-(methylsulfanyl)pent-1-en-3-one + phosphate. The protein operates within amino-acid biosynthesis; L-methionine biosynthesis via salvage pathway; L-methionine from S-methyl-5-thio-alpha-D-ribose 1-phosphate: step 3/6. It functions in the pathway amino-acid biosynthesis; L-methionine biosynthesis via salvage pathway; L-methionine from S-methyl-5-thio-alpha-D-ribose 1-phosphate: step 4/6. Bifunctional enzyme that catalyzes the enolization of 2,3-diketo-5-methylthiopentyl-1-phosphate (DK-MTP-1-P) into the intermediate 2-hydroxy-3-keto-5-methylthiopentenyl-1-phosphate (HK-MTPenyl-1-P), which is then dephosphorylated to form the acireductone 1,2-dihydroxy-3-keto-5-methylthiopentene (DHK-MTPene). This Bos taurus (Bovine) protein is Enolase-phosphatase E1.